The sequence spans 193 residues: Xanthine phosphoribosyltransferase (193 aa).

Xanthine is bound by residues L20 and N27. A128 to A132 is a binding site for 5-phospho-alpha-D-ribose 1-diphosphate. K156 provides a ligand contact to xanthine.

The protein belongs to the purine/pyrimidine phosphoribosyltransferase family. Xpt subfamily. In terms of assembly, homodimer.

It localises to the cytoplasm. The enzyme catalyses XMP + diphosphate = xanthine + 5-phospho-alpha-D-ribose 1-diphosphate. The protein operates within purine metabolism; XMP biosynthesis via salvage pathway; XMP from xanthine: step 1/1. Converts the preformed base xanthine, a product of nucleic acid breakdown, to xanthosine 5'-monophosphate (XMP), so it can be reused for RNA or DNA synthesis. This Exiguobacterium sp. (strain ATCC BAA-1283 / AT1b) protein is Xanthine phosphoribosyltransferase.